A 199-amino-acid chain; its full sequence is Recombination protein RecR (199 aa).

The C4-type zinc finger occupies 58-73 (CKTCGNIDTQSPCTVC). In terms of domain architecture, Toprim spans 81–176 (AMIVVVADVA…KVTRLAHGVP (96 aa)).

The protein belongs to the RecR family.

In terms of biological role, may play a role in DNA repair. It seems to be involved in an RecBC-independent recombinational process of DNA repair. It may act with RecF and RecO. The chain is Recombination protein RecR from Bradyrhizobium sp. (strain ORS 278).